Here is a 236-residue protein sequence, read N- to C-terminus: Leucyl/phenylalanyl-tRNA--protein transferase (236 aa).

It belongs to the L/F-transferase family.

The protein localises to the cytoplasm. The catalysed reaction is N-terminal L-lysyl-[protein] + L-leucyl-tRNA(Leu) = N-terminal L-leucyl-L-lysyl-[protein] + tRNA(Leu) + H(+). It catalyses the reaction N-terminal L-arginyl-[protein] + L-leucyl-tRNA(Leu) = N-terminal L-leucyl-L-arginyl-[protein] + tRNA(Leu) + H(+). It carries out the reaction L-phenylalanyl-tRNA(Phe) + an N-terminal L-alpha-aminoacyl-[protein] = an N-terminal L-phenylalanyl-L-alpha-aminoacyl-[protein] + tRNA(Phe). Functions in the N-end rule pathway of protein degradation where it conjugates Leu, Phe and, less efficiently, Met from aminoacyl-tRNAs to the N-termini of proteins containing an N-terminal arginine or lysine. The protein is Leucyl/phenylalanyl-tRNA--protein transferase of Yersinia enterocolitica serotype O:8 / biotype 1B (strain NCTC 13174 / 8081).